The primary structure comprises 443 residues: Cyclic GMP-AMP synthase (443 aa).

Serine 61 is an ATP binding site. Catalysis depends on residues aspartate 78 and aspartate 80. Aspartate 80 is a binding site for Mg(2+). Asparagine 124 provides a ligand contact to ATP. Residue aspartate 138 is part of the active site. Mg(2+) is bound at residue aspartate 138. Leucine 208 contacts ATP.

Belongs to the CD-NTase family. B06 subfamily. Mg(2+) is required as a cofactor.

The catalysed reaction is GTP + ATP = 3',3'-cGAMP + 2 diphosphate. It catalyses the reaction UTP + ATP = 3',3'-cUAMP + 2 diphosphate. The enzyme catalyses 2 ATP = 3',3'-c-di-AMP + 2 diphosphate. It carries out the reaction 2 GTP = 3',3'-c-di-GMP + 2 diphosphate. The catalysed reaction is UTP + GTP = 3',3'-cGMP-UMP + 2 diphosphate. Functionally, cyclic nucleotide synthase (second messenger synthase) of a CBASS antivirus system. CBASS (cyclic oligonucleotide-based antiphage signaling system) provides immunity against bacteriophages. The CD-NTase protein (CdnB, this protein) synthesizes cyclic nucleotides in response to infection; these serve as specific second messenger signals. The signals activate a diverse range of effectors, leading to bacterial cell death and thus abortive phage infection. The effector protein for this system is membrane protein Cap15. Its function is as follows. Catalyzes the synthesis of 3',3'-cyclic GMP-AMP (3'3'-cGAMP) from GTP and ATP, a second messenger in cell signal transduction. Also makes cyclic UMP-AMP, cyclic UMP-GMP, cyclic di-AMP and cyclic-di-GMP. In terms of biological role, protects E.coli against phage infection. When the CBASS operon (cdnB-cap15) is introduced in E.coli MG1655 there is about 100-fold protection against phage T2 and about 10-fold protection against phage T5 and T6. The protein is Cyclic GMP-AMP synthase of Escherichia albertii.